A 517-amino-acid polypeptide reads, in one-letter code: Keratin-associated protein 16-1 (517 aa).

11 tandem repeats follow at residues 73 to 77, 93 to 97, 128 to 132, 153 to 157, 168 to 172, 198 to 202, 208 to 212, 228 to 232, 248 to 252, 283 to 287, and 303 to 307. The segment at 73–307 is 11 X 5 AA repeats of C-C-X(3); sequence CCDPVICEPS…CQEPSCCVSS (235 aa). The segment at 483 to 517 is disordered; it reads VSEEAPCQPTEAKPISPTTREAAAAQPAASKPANC. Residues 504-517 show a composition bias toward low complexity; the sequence is AAAAQPAASKPANC.

It belongs to the KRTAP type 16 family.

The chain is Keratin-associated protein 16-1 (KRTAP16-1) from Homo sapiens (Human).